The sequence spans 478 residues: Monocarboxylate transporter 2 (478 aa).

Topologically, residues Met1–Asp15 are cytoplasmic. Residues Gly16 to Phe36 traverse the membrane as a helical segment. The Extracellular portion of the chain corresponds to Pro37–Ala59. The helical transmembrane segment at Trp60–Val80 threads the bilayer. Topologically, residues Asn81–Val89 are cytoplasmic. Residues Ile90–Val110 form a helical membrane-spanning segment. Residues Gln111–Thr115 lie on the Extracellular side of the membrane. The chain crosses the membrane as a helical span at residues Met116 to Gly136. Over Lys137–Gly148 the chain is Cytoplasmic. A helical membrane pass occupies residues Leu149–Phe169. The Extracellular segment spans residues Asn170 to Gly173. A helical transmembrane segment spans residues Trp174–Leu194. Topologically, residues Met195–Gly246 are cytoplasmic. Residues Pro200–Lys224 are disordered. Residues Phe247–Phe267 traverse the membrane as a helical segment. The Extracellular segment spans residues Leu268–Ala282. A helical transmembrane segment spans residues Ala283 to Ile303. Residues Ala304–Arg312 lie on the Cytoplasmic side of the membrane. The chain crosses the membrane as a helical span at residues Ile313–Leu333. The Extracellular segment spans residues Ala334 to Thr338. A helical membrane pass occupies residues Ser339 to Phe359. Topologically, residues Glu360–Ser373 are cytoplasmic. The helical transmembrane segment at Ala374–Gly394 threads the bilayer. At Lys395–Met406 the chain is on the extracellular side. Residues Tyr407–Ile427 traverse the membrane as a helical segment. Over Asn428–Ile478 the chain is Cytoplasmic. The span at Lys437 to Asn461 shows a compositional bias: basic and acidic residues. Residues Lys437–Ile478 form a disordered region.

It belongs to the major facilitator superfamily. Monocarboxylate porter (TC 2.A.1.13) family. As to quaternary structure, homodimer. Interacts with GRID2IP. Interacts with EMB; interaction mediates SLC16A7 targeting to the plasma membrane. Interacts with isoform 2 of BSG. Detected in heart and in blood lymphocytes and monocytes (at protein level). High expression in testis, moderate to low in spleen, heart, kidney, pancreas, skeletal muscle, brain and leukocyte. Restricted expression in normal tissues, but widely expressed in cancer cells.

It localises to the cell membrane. It is found in the basolateral cell membrane. Its subcellular location is the cytoplasm. It catalyses the reaction pyruvate(out) + H(+)(out) = pyruvate(in) + H(+)(in). The enzyme catalyses 3-methyl-2-oxobutanoate(out) + H(+)(out) = 3-methyl-2-oxobutanoate(in) + H(+)(in). It carries out the reaction (S)-lactate(in) + H(+)(in) = (S)-lactate(out) + H(+)(out). The catalysed reaction is acetoacetate(out) + H(+)(out) = acetoacetate(in) + H(+)(in). It catalyses the reaction (R)-3-hydroxybutanoate(out) + H(+)(out) = (R)-3-hydroxybutanoate(in) + H(+)(in). The enzyme catalyses 4-methyl-2-oxopentanoate(out) + H(+)(out) = 4-methyl-2-oxopentanoate(in) + H(+)(in). It carries out the reaction (S)-3-hydroxybutanoate(out) + H(+)(out) = (S)-3-hydroxybutanoate(in) + H(+)(in). Transport activity exhibits steep dependence on substrate concentration. Substrate concentration sensitivity of SLC16A7 arises from the strong inter-subunit cooperativity of the SLC16A7 dimer during transport. Inhibited by AR-C155858. Functionally, proton-coupled monocarboxylate symporter. Catalyzes the rapid transport across the plasma membrane of monocarboxylates such as L-lactate, pyruvate and ketone bodies, acetoacetate, beta-hydroxybutyrate and acetate. Dimerization is functionally required and both subunits work cooperatively in transporting substrate. The chain is Monocarboxylate transporter 2 from Homo sapiens (Human).